The primary structure comprises 120 residues: uncharacterized protein (120 aa).

The protein to M.tuberculosis Rv0026 and Rv0739.

This is an uncharacterized protein from Mycobacterium tuberculosis (strain CDC 1551 / Oshkosh).